The sequence spans 250 residues: Triosephosphate isomerase (250 aa).

Residue Asn9–Lys11 coordinates substrate. Residue His95 is the Electrophile of the active site. The active-site Proton acceptor is the Glu167. Substrate is bound by residues Gly173, Ser213, and Gly234 to Gly235.

This sequence belongs to the triosephosphate isomerase family. As to quaternary structure, homodimer.

Its subcellular location is the cytoplasm. The catalysed reaction is D-glyceraldehyde 3-phosphate = dihydroxyacetone phosphate. The protein operates within carbohydrate biosynthesis; gluconeogenesis. Its pathway is carbohydrate degradation; glycolysis; D-glyceraldehyde 3-phosphate from glycerone phosphate: step 1/1. Functionally, involved in the gluconeogenesis. Catalyzes stereospecifically the conversion of dihydroxyacetone phosphate (DHAP) to D-glyceraldehyde-3-phosphate (G3P). The chain is Triosephosphate isomerase from Flavobacterium psychrophilum (strain ATCC 49511 / DSM 21280 / CIP 103535 / JIP02/86).